Consider the following 98-residue polypeptide: Large ribosomal subunit protein uL23 (98 aa).

The protein belongs to the universal ribosomal protein uL23 family. As to quaternary structure, part of the 50S ribosomal subunit. Contacts protein L29, and trigger factor when it is bound to the ribosome.

One of the early assembly proteins it binds 23S rRNA. One of the proteins that surrounds the polypeptide exit tunnel on the outside of the ribosome. Forms the main docking site for trigger factor binding to the ribosome. In Parafrankia sp. (strain EAN1pec), this protein is Large ribosomal subunit protein uL23.